Reading from the N-terminus, the 235-residue chain is C-&gt;U-editing enzyme APOBEC-1 (235 aa).

The CMP/dCMP-type deaminase domain maps to Gly10–Lys131. Residue His60 participates in Zn(2+) binding. Glu62 acts as the Proton donor in catalysis. Zn(2+) is bound by residues Cys92 and Cys95.

It belongs to the cytidine and deoxycytidylate deaminase family. As to quaternary structure, homodimer. Interacts with A1CF; form an mRNA editing complex. Interacts with RBM47; form an mRNA editing complex. Found in a complex with CELF2/CUGBP2 and A1CF. Interacts with HNRPAB. Interacts with SYNCRIP. Zn(2+) serves as cofactor.

The protein resides in the cytoplasm. It is found in the nucleus. The catalysed reaction is a cytidine in mRNA + H2O + H(+) = a uridine in mRNA + NH4(+). The enzyme catalyses cytidine(6666) in apoB mRNA + H2O + H(+) = uridine(6666) in apoB mRNA + NH4(+). Cytidine deaminase catalyzing the cytidine to uridine postranscriptional editing of a variety of mRNAs. Form complexes with cofactors that confer differential editing activity and selectivity. Responsible for the postranscriptional editing of a CAA codon for Gln to a UAA codon for stop in the apolipoprotein B mRNA. Also involved in CGA (Arg) to UGA (Stop) editing in the NF1 mRNA. May also play a role in the epigenetic regulation of gene expression by participating in DNA demethylation. The sequence is that of C-&gt;U-editing enzyme APOBEC-1 from Monodelphis domestica (Gray short-tailed opossum).